Reading from the N-terminus, the 41-residue chain is ORF3c protein (41 aa).

Functionally, may play a role in host modulation. In Severe acute respiratory syndrome coronavirus 2 (2019-nCoV), this protein is ORF3c protein.